A 571-amino-acid chain; its full sequence is Wee1-like protein kinase 1-A (571 aa).

Positions 1-101 (MSLQPVPHRL…PDCPGTPPHK (101 aa)) are disordered. Residues 81–98 (PASPPGPAASPPDCPGTP) are compositionally biased toward pro residues. The Protein kinase domain maps to 224–494 (FHELEKIGSG…SMALVKHSVL (271 aa)). ATP contacts are provided by residues 230–238 (IGSGEFGSV) and lysine 253. The active-site Proton acceptor is the aspartate 351. Residues asparagine 356 and aspartate 388 each coordinate Mg(2+). A coiled-coil region spans residues 500 to 539 (KNAEQLRIELNAEKFKNALLQKELKKAQIAKAAAEERALF).

Belongs to the protein kinase superfamily. Ser/Thr protein kinase family. WEE1 subfamily. As to expression, zygotically expressed. Expressed in regions of the embryo that are devoid of mitotic cells, such as the involuting mesoderm.

The protein resides in the nucleus. The catalysed reaction is L-tyrosyl-[protein] + ATP = O-phospho-L-tyrosyl-[protein] + ADP + H(+). Acts as a zygotic negative regulator of entry into mitosis (G2 to M transition) by protecting the nucleus from cytoplasmically activated cyclin B1-complexed cdk1 before the onset of mitosis by mediating phosphorylation of cdk1 on 'Tyr-15'. Specifically phosphorylates and inactivates cyclin B1-complexed cdk1 reaching a maximum during G2 phase and a minimum as cells enter M phase. Phosphorylation of cyclin B1-cdk1 occurs exclusively on 'Tyr-15' and phosphorylation of monomeric cdk1 does not occur. Involved in convergent extension of the paraxial mesoderm during neurulation by inhibiting the cell cycle. The polypeptide is Wee1-like protein kinase 1-A (wee1-a) (Xenopus laevis (African clawed frog)).